Consider the following 82-residue polypeptide: Exodeoxyribonuclease 7 small subunit (82 aa).

Belongs to the XseB family. As to quaternary structure, heterooligomer composed of large and small subunits.

It is found in the cytoplasm. The catalysed reaction is Exonucleolytic cleavage in either 5'- to 3'- or 3'- to 5'-direction to yield nucleoside 5'-phosphates.. Its function is as follows. Bidirectionally degrades single-stranded DNA into large acid-insoluble oligonucleotides, which are then degraded further into small acid-soluble oligonucleotides. The chain is Exodeoxyribonuclease 7 small subunit from Pectobacterium atrosepticum (strain SCRI 1043 / ATCC BAA-672) (Erwinia carotovora subsp. atroseptica).